Reading from the N-terminus, the 353-residue chain is Paraneoplastic antigen Ma1 homolog (353 aa).

The protein belongs to the PNMA family.

The protein resides in the nucleus. Its subcellular location is the nucleolus. The polypeptide is Paraneoplastic antigen Ma1 homolog (PNMA1) (Bos taurus (Bovine)).